A 280-amino-acid chain; its full sequence is Shikimate dehydrogenase (NADP(+)) (280 aa).

Residues 15–17 (SLS) and T62 each bind shikimate. K66 functions as the Proton acceptor in the catalytic mechanism. Positions 88 and 104 each coordinate shikimate. NADP(+) is bound by residues 128–132 (GAGGA), 151–156 (NRTEER), and I222. Residue Y224 participates in shikimate binding. Residue G245 coordinates NADP(+).

Belongs to the shikimate dehydrogenase family. Homodimer.

It catalyses the reaction shikimate + NADP(+) = 3-dehydroshikimate + NADPH + H(+). Its pathway is metabolic intermediate biosynthesis; chorismate biosynthesis; chorismate from D-erythrose 4-phosphate and phosphoenolpyruvate: step 4/7. In terms of biological role, involved in the biosynthesis of the chorismate, which leads to the biosynthesis of aromatic amino acids. Catalyzes the reversible NADPH linked reduction of 3-dehydroshikimate (DHSA) to yield shikimate (SA). This chain is Shikimate dehydrogenase (NADP(+)), found in Methanosarcina mazei (strain ATCC BAA-159 / DSM 3647 / Goe1 / Go1 / JCM 11833 / OCM 88) (Methanosarcina frisia).